The chain runs to 444 residues: NAD(P)-specific glutamate dehydrogenase (444 aa).

Residues lysine 88, glutamine 109, and lysine 112 each coordinate substrate. The active-site Proton donor is lysine 124. Glycine 163 lines the substrate pocket. The NADP(+) site is built by threonine 207 and asparagine 238. Serine 376 serves as a coordination point for substrate.

Belongs to the Glu/Leu/Phe/Val dehydrogenases family. Homohexamer.

The enzyme catalyses L-glutamate + NAD(+) + H2O = 2-oxoglutarate + NH4(+) + NADH + H(+). The catalysed reaction is L-glutamate + NADP(+) + H2O = 2-oxoglutarate + NH4(+) + NADPH + H(+). In terms of biological role, catalyzes the reversible oxidative deamination of glutamate to alpha-ketoglutarate and ammonia. P.ruminicola possess both NADP(H)- and NAD(H)-dependent activities on the same enzyme, suggesting that both anabolic and catabolic forms of the enzyme might occur. The sequence is that of NAD(P)-specific glutamate dehydrogenase (gdhA) from Xylanibacter ruminicola (Prevotella ruminicola).